The following is a 247-amino-acid chain: Mast cell protease 2 (247 aa).

A signal peptide spans 1–18; that stretch reads MQALLFLMALLLPSGAGA. The propeptide at 19 to 20 is activation peptide; sequence EE. The 224-residue stretch at 21–244 folds into the Peptidase S1 domain; that stretch reads IIGGVESIPH…YVPWINAVIN (224 aa). The cysteines at positions 50 and 66 are disulfide-linked. Active-site charge relay system residues include H65 and D109. Cystine bridges form between C143/C208 and C174/C187. The Charge relay system role is filled by S202.

It belongs to the peptidase S1 family. Granzyme subfamily.

Its function is as follows. This enzyme, isolated from small intestine, specifically inactivates the apo forms of a certain group of intracellular pyridoxal phosphate-requiring enzymes. It has chymotrypsin-like specificity towards small substrates. The chain is Mast cell protease 2 (Mcpt2) from Rattus norvegicus (Rat).